The chain runs to 205 residues: Small ribosomal subunit protein uS4 (205 aa).

The interval 20 to 46 (WGRSKSPVNRREYGPGQHGQRRKGKLS) is disordered. Residues 94–157 (RRLDAVVYRA…RQLTLVLEAS (64 aa)) enclose the S4 RNA-binding domain.

This sequence belongs to the universal ribosomal protein uS4 family. In terms of assembly, part of the 30S ribosomal subunit. Contacts protein S5. The interaction surface between S4 and S5 is involved in control of translational fidelity.

In terms of biological role, one of the primary rRNA binding proteins, it binds directly to 16S rRNA where it nucleates assembly of the body of the 30S subunit. With S5 and S12 plays an important role in translational accuracy. The polypeptide is Small ribosomal subunit protein uS4 (Beijerinckia indica subsp. indica (strain ATCC 9039 / DSM 1715 / NCIMB 8712)).